The primary structure comprises 266 residues: Translation initiation factor 2 subunit alpha (266 aa).

The region spanning 10-81 (GELVVGKIDE…SAQQIDLSIK (72 aa)) is the S1 motif domain. The disordered stretch occupies residues 233 to 266 (AEDALEESADRAAKVVEQHGGSGQFHRERSEDDE). Composition is skewed to basic and acidic residues over residues 240–249 (SADRAAKVVE) and 257–266 (FHRERSEDDE).

Belongs to the eIF-2-alpha family. In terms of assembly, heterotrimer composed of an alpha, a beta and a gamma chain.

In terms of biological role, eIF-2 functions in the early steps of protein synthesis by forming a ternary complex with GTP and initiator tRNA. This chain is Translation initiation factor 2 subunit alpha, found in Haloarcula marismortui (strain ATCC 43049 / DSM 3752 / JCM 8966 / VKM B-1809) (Halobacterium marismortui).